The chain runs to 395 residues: Cytochrome b561 and DOMON domain-containing protein At5g47530 (395 aa).

Residues 1–24 form the signal peptide; it reads MAISSNLLLCLSLFIFIITKSALA. The DOMON domain occupies 47-162; the sequence is LDSFLHYTYD…GIINTVWQDG (116 aa). Residues 176 to 371 enclose the Cytochrome b561 domain; that stretch reads GNNVRSVSTL…LEGFTWYVVI (196 aa). Helical transmembrane passes span 210-230 and 242-262; these read IHGI…AIIA and AWFY…VAGW. Residues histidine 211, histidine 247, and histidine 280 each contribute to the heme b site. A helical transmembrane segment spans residues 282 to 302; sequence AVGIALFCLATIQVFAMFLRP. Histidine 316 is a binding site for heme b. The next 2 membrane-spanning stretches (helical) occupy residues 318 to 338 and 351 to 371; these read TVGY…LDIL and IIVV…YVVI.

Requires heme b as cofactor.

It is found in the membrane. In terms of biological role, may act as a catecholamine-responsive trans-membrane electron transporter. This chain is Cytochrome b561 and DOMON domain-containing protein At5g47530, found in Arabidopsis thaliana (Mouse-ear cress).